The chain runs to 384 residues: G protein-coupled receptor 88 (384 aa).

Topologically, residues 1–35 (MTNSSSTSTSTTTGGSLLLLCEEEESWAGRRIPVS) are extracellular. Asparagine 3 carries an N-linked (GlcNAc...) asparagine glycan. A helical membrane pass occupies residues 36 to 56 (LLYSGLAIGGTLANGMVIYLV). Topologically, residues 57–73 (SSFRKLQTTSNAFIVNG) are cytoplasmic. The chain crosses the membrane as a helical span at residues 74-94 (CAADLSVCALWMPQEAVLGLL). Residues 95–116 (PSGSAEPPGDWDGGGGSYRLLR) lie on the Extracellular side of the membrane. A helical membrane pass occupies residues 117–136 (GGLLGLGLTVSLLSHCLVAL). Residues 137-158 (NRYLLITRAPATYQVLYQRRHT) lie on the Cytoplasmic side of the membrane. A helical membrane pass occupies residues 159 to 179 (VGMLALSWALALGLVLLLPPW). Residues 180–195 (APKPGAEPPQVHYPAL) lie on the Extracellular side of the membrane. The chain crosses the membrane as a helical span at residues 196–216 (LAAGALLAQTALLLHCYLGIV). At 217 to 285 (RRVRVSVKRV…RAQRRLSGLS (69 aa)) the chain is on the cytoplasmic side. Residues 286-306 (VLLLCCVFLLATQPLVWVSLA) traverse the membrane as a helical segment. Residues 307 to 310 (SGFS) are Extracellular-facing. The chain crosses the membrane as a helical span at residues 311-331 (LPVPWGVQAASWLLCCALSAL). Residues 332–384 (NPLLYTWRNEEFRRSVRSVLPGVGDAAAAAAAATAVPAMSQAQLGTRAAGQHW) lie on the Cytoplasmic side of the membrane.

The protein belongs to the G-protein coupled receptor 1 family. As to expression, expressed predominantly in the striatum.

It is found in the cell membrane. The protein localises to the cell projection. It localises to the cilium membrane. The protein resides in the cytoplasm. Its subcellular location is the nucleus. Functionally, orphan G protein-coupled receptor implicated in a large repertoire of behavioral responses that engage motor activities, spatial learning, and emotional processing. May play a role in the regulation of cognitive and motor function. Couples with the heterotrimeric G protein complex of the G(i) subfamily, consisting of GNAI1, GNB1 and GNG2, thereby acting through a G(i)-mediated pathway. Plays a role in the attenuation of D1 dopamine receptor (D1R)-mediated cAMP response in ciliated cells. In on-ciliated cells, involved in the inhibition of the beta-2 adrenergic receptor (B2AR) response. This chain is G protein-coupled receptor 88 (Gpr88), found in Mus musculus (Mouse).